Here is a 166-residue protein sequence, read N- to C-terminus: Phospholipase A2 inhibitor clone 05 (166 aa).

A signal peptide spans 1–19; the sequence is MRLILLSSLLLLGIFLADG. The region spanning 46–161 is the C-type lectin domain; that stretch reads LKGAFLTVHR…CDDNLLVVCE (116 aa). Cystine bridges form between C83-C160 and C138-C152. N122 carries an N-linked (GlcNAc...) asparagine glycan.

Belongs to the alpha-type phospholipase A2 inhibitor family. Homotrimer; non-covalently linked. Expressed by the liver.

Its subcellular location is the secreted. In terms of biological role, this phospholipase A2 inhibitor binds directly phospholipase A2 in the presence or absence of calcium. The sequence is that of Phospholipase A2 inhibitor clone 05 from Bothrops moojeni (Lance-headed viper).